Consider the following 339-residue polypeptide: NmrA-like family domain-containing oxidoreductase notA (339 aa).

NADP(+) is bound by residues 13–18, 39–43, 60–61, 81–83, K140, and 164–167; these read GATGAQ, RKPDS, DG, TNS, and YMGI.

This sequence belongs to the NmrA-type oxidoreductase family.

Its function is as follows. NmrA-like family domain-containing oxidoreductase; part of the gene cluster that mediates the biosynthesis of notoamide, a fungal indole alkaloid that belongs to a family of natural products containing a characteristic bicyclo[2.2.2]diazaoctane core. The first step of notoamide biosynthesis involves coupling of L-proline and L-tryptophan by the bimodular NRPS notE, to produce cyclo-L-tryptophan-L-proline called brevianamide F. The reverse prenyltransferase notF then acts as a deoxybrevianamide E synthase and converts brevianamide F to deoxybrevianamide E via reverse prenylation at C-2 of the indole ring leading to the bicyclo[2.2.2]diazaoctane core. Deoxybrevianamide E is further hydroxylated at C-6 of the indole ring, likely catalyzed by the cytochrome P450 monooxygenase notG, to yield 6-hydroxy-deoxybrevianamide E. 6-hydroxy-deoxybrevianamide E is a specific substrate of the prenyltransferase notC for normal prenylation at C-7 to produce 6-hydroxy-7-prenyl-deoxybrevianamide, also called notoamide S. As the proposed pivotal branching point in notoamide biosynthesis, notoamide S can be diverted to notoamide E through an oxidative pyran ring closure putatively catalyzed by either notH cytochrome P450 monooxygenase or the notD FAD-linked oxidoreductase. This step would be followed by an indole 2,3-epoxidation-initiated pinacol-like rearrangement catalyzed by the notB FAD-dependent monooxygenase leading to the formation of notoamide C and notoamide D. On the other hand notoamide S is converted to notoamide T by notH (or notD), a bifunctional oxidase that also functions as the intramolecular Diels-Alderase responsible for generation of (+)-notoamide T. To generate antipodal (-)-notoaminide T, notH' (or notD') in Aspergillus versicolor is expected to catalyze a Diels-Alder reaction leading to the opposite stereochemistry. The remaining oxidoreductase notD (or notH) likely catalyzes the oxidative pyran ring formation to yield (+)-stephacidin A. The FAD-dependent monooxygenase notI is highly similar to notB and is predicted to catalyze a similar conversion from (+)-stephacidin A to (-)-notoamide B via the 2,3-epoxidation of (+)-stephacidin A followed by a pinacol-type rearrangement. Finally, it remains unclear which enzyme could be responsible for the final hydroxylation steps leading to notoamide A and sclerotiamide. The protein is NmrA-like family domain-containing oxidoreductase notA of Aspergillus sp. (strain MF297-2).